The following is a 520-amino-acid chain: FAD-linked oxidoreductase OXR2 (520 aa).

Residues 1 to 23 (MKSFSLLASAGLATLASLPLTMA) form the signal peptide. N-linked (GlcNAc...) asparagine glycosylation is found at Asn-77, Asn-220, Asn-378, and Asn-390. The region spanning 79-251 (SRPTIRLVVV…TSFQSKIYPR (173 aa)) is the FAD-binding PCMH-type domain.

This sequence belongs to the oxygen-dependent FAD-linked oxidoreductase family. The cofactor is FAD.

It functions in the pathway polyketide biosynthesis. In terms of biological role, FAD-linked oxidoreductase; part of the gene cluster that mediates the biosynthesis of pyriculol and pyriculariol, two heptaketides that induce lesion formation upon application on rice leaves but are dispensable for pathogenicity. The highly reducing polyketide synthase synthesizes the heptaketide backbone of pyriculol and pyriculariol. Pyriculol and pyriculariol contain several hydroxyl moieties and double bonds, so it can be assumed that several reduction steps occur during biosynthesis. These reactions could be executed by PKS19 itself or partly by the tailoring enzymes OXR1, OXR2, RED1, RED2 or RED3, identified within the cluster. The FAD-linked oxidoreductase OXR1 is the only tailoring enzyme for which the function has been determined yet, and is involved in the oxidation of dihydropyriculol and dihydropyriculariol into pyriculol and pyriculariol, respectively. This chain is FAD-linked oxidoreductase OXR2, found in Pyricularia oryzae (strain 70-15 / ATCC MYA-4617 / FGSC 8958) (Rice blast fungus).